The sequence spans 472 residues: POU domain, class 5, transcription factor 1 (472 aa).

2 disordered regions span residues 127-154 and 187-255; these read MPSE…YHLT and ISQA…LTTE. The segment covering 220–234 has biased composition (polar residues); the sequence is TAQNIPSAQAQSAPR. The segment covering 235-245 has biased composition (low complexity); it reads SSGSSSGGCSN. Positions 246-255 are enriched in acidic residues; that stretch reads SEEEETLTTE. The region spanning 249-323 is the POU-specific domain; that stretch reads EETLTTEDLE…LLQRWLNEAE (75 aa). The segment at residues 343–402 is a DNA-binding region (homeobox); sequence KRKRRTSLEGTVRSALESYFVKCPKPNTLEITHISDDLGLERDVVRVWFCNRRQKGKRLA.

It belongs to the POU transcription factor family. Class-7 subfamily.

Its subcellular location is the nucleus. Its function is as follows. Involved in early development of embryos, especially in the process of gastrulation. May play an important role in establishing and specifying rhombomeric segments. Seems to be required to maintain the cells in a highly undifferentiated state. In contrast to POU2, T-POU2 lacks DNA-binding activity because of its incomplete pou domain structure. Overexpression of POU2 does not have any effect on development, whereas overexpression of t-POU2 causes developmental retardation or arrest before gastrulation. The sequence is that of POU domain, class 5, transcription factor 1 (pou5f1) from Danio rerio (Zebrafish).